Reading from the N-terminus, the 209-residue chain is Ribosomal RNA large subunit methyltransferase E (209 aa).

Residues G63, W65, D83, D99, and D124 each contribute to the S-adenosyl-L-methionine site. Residue K164 is the Proton acceptor of the active site.

It belongs to the class I-like SAM-binding methyltransferase superfamily. RNA methyltransferase RlmE family.

The protein resides in the cytoplasm. The enzyme catalyses uridine(2552) in 23S rRNA + S-adenosyl-L-methionine = 2'-O-methyluridine(2552) in 23S rRNA + S-adenosyl-L-homocysteine + H(+). Specifically methylates the uridine in position 2552 of 23S rRNA at the 2'-O position of the ribose in the fully assembled 50S ribosomal subunit. The protein is Ribosomal RNA large subunit methyltransferase E of Escherichia coli O81 (strain ED1a).